The sequence spans 111 residues: Large ribosomal subunit protein uL22 (111 aa).

Belongs to the universal ribosomal protein uL22 family. Part of the 50S ribosomal subunit.

Its function is as follows. This protein binds specifically to 23S rRNA; its binding is stimulated by other ribosomal proteins, e.g. L4, L17, and L20. It is important during the early stages of 50S assembly. It makes multiple contacts with different domains of the 23S rRNA in the assembled 50S subunit and ribosome. The globular domain of the protein is located near the polypeptide exit tunnel on the outside of the subunit, while an extended beta-hairpin is found that lines the wall of the exit tunnel in the center of the 70S ribosome. The polypeptide is Large ribosomal subunit protein uL22 (Clostridioides difficile (strain 630) (Peptoclostridium difficile)).